Reading from the N-terminus, the 473-residue chain is MKTLYSLRRFYPVETLFNGTLALAGRDQETTGFAWWAGNARLINLSGKLLGAHVAHAGLIVFWAGAMNLFEVAHFVPEKPMYEQGLILLPHLATLGWGVGPGGEVIDTFPYFVSGVLHLISSAVLGFGGIYHALLGPETLEESFPFFGYVWKDRNKMTTILGIHLILLGLGAFLLVFKALYFGGVYDTWAPGGGDVRKITNLTLSPSIIFGYLLKSPFGGEGWIVSVDDLEDIIGGHVWLGSICILGGIWHILTKPFAWARRALVWSGEAYLSYSLAAISVFGFIACCFVWFNNTAYPSEFYGPTGPEASQAQAFTFLVRDQRLGANVGSAQGPTGLGKYLMRSPTGEVIFGGETMRFWDLRAPWLEPLRGPNGLDLSRLKKDIQPWQERRSAEYMTHAPLGSLNSVGGVATEINAVNYVSPRSWLATSHFVLGFFFFVGHLWHAGRARAAAAGFEKGIDRDFEPVLSMTPLN.

Residues 1–14 (MKTLYSLRRFYPVE) constitute a propeptide that is removed on maturation. An N-acetylthreonine modification is found at Thr15. Position 15 is a phosphothreonine (Thr15). A run of 5 helical transmembrane segments spans residues 69 to 93 (LFEV…PHLA), 134 to 155 (LLGP…KDRN), 178 to 200 (KALY…RKIT), 255 to 275 (KPFA…LSYS), and 291 to 312 (WFNN…ASQA). Glu367 contributes to the [CaMn4O5] cluster binding site. The chain crosses the membrane as a helical span at residues 447–471 (RARAAAAGFEKGIDRDFEPVLSMTP).

Belongs to the PsbB/PsbC family. PsbC subfamily. In terms of assembly, PSII is composed of 1 copy each of membrane proteins PsbA, PsbB, PsbC, PsbD, PsbE, PsbF, PsbH, PsbI, PsbJ, PsbK, PsbL, PsbM, PsbT, PsbX, PsbY, PsbZ, Psb30/Ycf12, at least 3 peripheral proteins of the oxygen-evolving complex and a large number of cofactors. It forms dimeric complexes. Binds multiple chlorophylls and provides some of the ligands for the Ca-4Mn-5O cluster of the oxygen-evolving complex. It may also provide a ligand for a Cl- that is required for oxygen evolution. PSII binds additional chlorophylls, carotenoids and specific lipids. serves as cofactor.

The protein resides in the plastid. Its subcellular location is the chloroplast thylakoid membrane. Its function is as follows. One of the components of the core complex of photosystem II (PSII). It binds chlorophyll and helps catalyze the primary light-induced photochemical processes of PSII. PSII is a light-driven water:plastoquinone oxidoreductase, using light energy to abstract electrons from H(2)O, generating O(2) and a proton gradient subsequently used for ATP formation. The chain is Photosystem II CP43 reaction center protein from Helianthus annuus (Common sunflower).